The chain runs to 72 residues: Translation initiation factor IF-1 (72 aa).

The S1-like domain occupies 1 to 72 (MAREDHIEME…SKGRIVYRAR (72 aa)).

This sequence belongs to the IF-1 family. Component of the 30S ribosomal translation pre-initiation complex which assembles on the 30S ribosome in the order IF-2 and IF-3, IF-1 and N-formylmethionyl-tRNA(fMet); mRNA recruitment can occur at any time during PIC assembly.

It localises to the cytoplasm. One of the essential components for the initiation of protein synthesis. Stabilizes the binding of IF-2 and IF-3 on the 30S subunit to which N-formylmethionyl-tRNA(fMet) subsequently binds. Helps modulate mRNA selection, yielding the 30S pre-initiation complex (PIC). Upon addition of the 50S ribosomal subunit IF-1, IF-2 and IF-3 are released leaving the mature 70S translation initiation complex. The chain is Translation initiation factor IF-1 from Chromohalobacter salexigens (strain ATCC BAA-138 / DSM 3043 / CIP 106854 / NCIMB 13768 / 1H11).